We begin with the raw amino-acid sequence, 229 residues long: 2-phytyl-1,4-naphtoquinone methyltransferase (229 aa).

This sequence belongs to the class I-like SAM-binding methyltransferase superfamily. MenG/UbiE family.

The enzyme catalyses demethylphylloquinol + S-adenosyl-L-methionine = phylloquinol + S-adenosyl-L-homocysteine + H(+). The protein operates within cofactor biosynthesis; phylloquinone biosynthesis. Functionally, methyltransferase required for the conversion of 2-phytyl-1,4-beta-naphthoquinol to phylloquinol. This Nostoc sp. (strain PCC 7120 / SAG 25.82 / UTEX 2576) protein is 2-phytyl-1,4-naphtoquinone methyltransferase.